Reading from the N-terminus, the 307-residue chain is Potassium channel subfamily K member 7 (307 aa).

At 1 to 10 (MGGLRPWSRY) the chain is on the cytoplasmic side. A helical membrane pass occupies residues 11-31 (GLLVVAHLLALGLGAVVFQAL). N-linked (GlcNAc...) asparagine glycosylation is present at Asn83. The pore-forming intramembrane region spans 92 to 119 (LPSALLFAASILTTTGYGHMAPLSPGGK). Residues 120-140 (AFCMVYAALGLPASLALVATL) traverse the membrane as a helical segment. The Cytoplasmic segment spans residues 141–170 (RHCLLPVLSRPRAWVAVHWQLSPARAALLQ). A helical transmembrane segment spans residues 171 to 191 (AVALGLLVASSFVLLPALVLW). Positions 199 to 227 (LLGAVYFCFSSLSTIGLEDLLPGRGRSLH) form an intramembrane region, pore-forming. The helical transmembrane segment at 233–253 (LGQLALLGYLLLGLLAMLLAV) threads the bilayer. The Cytoplasmic portion of the chain corresponds to 254 to 307 (ETFSELPQVRAMGKFFRPSGPVTAEDQGGILGQDELALSTLPPAAPASGQAPAC).

Belongs to the two pore domain potassium channel (TC 1.A.1.8) family. In terms of assembly, homodimer.

It localises to the membrane. In terms of biological role, probable potassium channel subunit. No channel activity observed in vitro as protein remains in the endoplasmic reticulum. May need to associate with an as yet unknown partner in order to reach the plasma membrane. This chain is Potassium channel subfamily K member 7 (KCNK7), found in Homo sapiens (Human).